A 277-amino-acid polypeptide reads, in one-letter code: 2-dehydro-3-deoxyphosphooctonate aldolase (277 aa).

Belongs to the KdsA family.

It localises to the cytoplasm. It carries out the reaction D-arabinose 5-phosphate + phosphoenolpyruvate + H2O = 3-deoxy-alpha-D-manno-2-octulosonate-8-phosphate + phosphate. It functions in the pathway carbohydrate biosynthesis; 3-deoxy-D-manno-octulosonate biosynthesis; 3-deoxy-D-manno-octulosonate from D-ribulose 5-phosphate: step 2/3. The protein operates within bacterial outer membrane biogenesis; lipopolysaccharide biosynthesis. The protein is 2-dehydro-3-deoxyphosphooctonate aldolase of Dichelobacter nodosus (strain VCS1703A).